A 389-amino-acid polypeptide reads, in one-letter code: Alpha carbonic anhydrase 8 (389 aa).

The first 22 residues, 1 to 22 (MKISSLGWVLVLIFISITIVSS), serve as a signal peptide directing secretion. Residues 21–153 (SSAPAPKPPK…TKGNKGPAKW (133 aa)) are disordered. Over residues 25–129 (APKPPKPKPA…PKPKPAPKPA (105 aa)) the composition is skewed to pro residues. Positions 138–374 (TEFSYETKGN…VNKRKVYLYK (237 aa)) constitute an Alpha-carbonic anhydrase domain. A disulfide bridge links C163 with C324. The N-linked (GlcNAc...) asparagine glycan is linked to N196. Catalysis depends on H204, which acts as the Proton acceptor. H232, H234, and H251 together coordinate Zn(2+). A substrate-binding site is contributed by 320 to 321 (TA). Residue N385 is glycosylated (N-linked (GlcNAc...) asparagine).

The protein belongs to the alpha-class carbonic anhydrase family. Requires Zn(2+) as cofactor. In terms of processing, N-glycosylated.

It localises to the plastid. The protein localises to the chloroplast stroma. It catalyses the reaction hydrogencarbonate + H(+) = CO2 + H2O. Its function is as follows. Reversible hydration of carbon dioxide. The chain is Alpha carbonic anhydrase 8 (ACA8) from Arabidopsis thaliana (Mouse-ear cress).